A 281-amino-acid chain; its full sequence is uncharacterized protein (281 aa).

It is found in the plastid. The protein resides in the chloroplast. This is an uncharacterized protein from Euglena gracilis.